A 457-amino-acid polypeptide reads, in one-letter code: Phosphoglucosamine mutase (457 aa).

S105 (phosphoserine intermediate) is an active-site residue. S105, D247, D249, and D251 together coordinate Mg(2+). Position 105 is a phosphoserine (S105).

Belongs to the phosphohexose mutase family. The cofactor is Mg(2+). Activated by phosphorylation.

The enzyme catalyses alpha-D-glucosamine 1-phosphate = D-glucosamine 6-phosphate. Its function is as follows. Catalyzes the conversion of glucosamine-6-phosphate to glucosamine-1-phosphate. In Protochlamydia amoebophila (strain UWE25), this protein is Phosphoglucosamine mutase.